The chain runs to 404 residues: CCA-adding enzyme (404 aa).

Gly32 and Arg35 together coordinate ATP. CTP-binding residues include Gly32 and Arg35. Residues Asp45 and Asp47 each contribute to the Mg(2+) site. 5 residues coordinate ATP: Arg116, Asp159, Arg162, Arg165, and Arg168. CTP is bound by residues Arg116, Asp159, Arg162, Arg165, and Arg168.

The protein belongs to the tRNA nucleotidyltransferase/poly(A) polymerase family. Bacterial CCA-adding enzyme type 3 subfamily. Homodimer. It depends on Mg(2+) as a cofactor.

It carries out the reaction a tRNA precursor + 2 CTP + ATP = a tRNA with a 3' CCA end + 3 diphosphate. The catalysed reaction is a tRNA with a 3' CCA end + 2 CTP + ATP = a tRNA with a 3' CCACCA end + 3 diphosphate. Catalyzes the addition and repair of the essential 3'-terminal CCA sequence in tRNAs without using a nucleic acid template. Adds these three nucleotides in the order of C, C, and A to the tRNA nucleotide-73, using CTP and ATP as substrates and producing inorganic pyrophosphate. tRNA 3'-terminal CCA addition is required both for tRNA processing and repair. Also involved in tRNA surveillance by mediating tandem CCA addition to generate a CCACCA at the 3' terminus of unstable tRNAs. While stable tRNAs receive only 3'-terminal CCA, unstable tRNAs are marked with CCACCA and rapidly degraded. This chain is CCA-adding enzyme, found in Ligilactobacillus salivarius (strain UCC118) (Lactobacillus salivarius).